The primary structure comprises 935 residues: Formin-I (935 aa).

Positions 35–76 form a coiled coil; that stretch reads QQQQQQQQQQINNENENSINNQENKENNNKDNNNNNNKEIKQ. Disordered regions lie at residues 52–78, 380–511, and 561–590; these read SINNQENKENNNKDNNNNNNKEIKQSS, LSSA…QLTP, and KEKMSKENLNNSNNNNNNNSNNNGEEQSLS. The span at 384-407 shows a compositional bias: low complexity; the sequence is KKQPQQQPQKDVTSSSSSSSNSSS. Polar residues predominate over residues 418–428; it reads ITTNDSSSSNP. Residues 431 to 443 show a composition bias toward basic and acidic residues; that stretch reads DFDKLSLSSDDKV. A compositionally biased stretch (polar residues) spans 444-454; that stretch reads NNNNVQIENTT. In terms of domain architecture, FH1 spans 444–505; the sequence is NNNNVQIENT…KPNNSGGGGG (62 aa). Positions 456–482 are enriched in pro residues; sequence SVPPPPPVGAPPPPPPPPPPPPPPPPS. A compositionally biased stretch (polar residues) spans 484–499; the sequence is LKLNRNRISTPKKPNN. The 430-residue stretch at 506–935 folds into the FH2 domain; sequence GGQLTPLQKK…SLNLSTLNSK (430 aa). Over residues 568 to 583 the composition is skewed to low complexity; that stretch reads NLNNSNNNNNNNSNNN. 2 coiled-coil regions span residues 702–730 and 803–834; these read SLLDSIEINNNQLSKAIEQLRNSRKFIKV and QSSLENILEESNEIENKFKQVDQEIQYHQQLL.

The protein belongs to the formin homology family. Diaphanous subfamily.

In terms of biological role, formins play an important role in the nucleation of actin and the formation of linear actin filaments. The chain is Formin-I (forI) from Dictyostelium discoideum (Social amoeba).